We begin with the raw amino-acid sequence, 647 residues long: Endogenous retrovirus group K member 8 Gag polyprotein (647 aa).

Gly2 carries N-myristoyl glycine lipidation. A disordered region spans residues 165-264; it reads GKGPELVGPS…APPSRQGSEL (100 aa). Positions 232–247 are enriched in pro residues; sequence GMPPAPQGREPYPQPP. 2 CCHC-type zinc fingers span residues 544–561 and 580–597; these read GKCY…NCPV and DLCP…QCRS. The tract at residues 598-641 is disordered; sequence KFDKNGQPLSGNEQRGQPQAPQQTGAFPIQPFVPQGFQDNNPHC. Residues 604–622 show a composition bias toward polar residues; sequence QPLSGNEQRGQPQAPQQTG.

It belongs to the beta type-B retroviral Gag protein family. HERV class-II K(HML-2) gag subfamily. Myristoylation is essential for retroviral assembly. Alteration of the glycine residue leads to a block in the budding of particles and an accumulation of Gag inside the cell. Post-translationally, specific enzymatic cleavages may yield mature proteins.

Its subcellular location is the cell membrane. Functionally, the products of the Gag polyproteins of infectious retroviruses perform highly complex orchestrated tasks during the assembly, budding, maturation, and infection stages of the viral replication cycle. During viral assembly, the proteins form membrane associations and self-associations that ultimately result in budding of an immature virion from the infected cell. Gag precursors also function during viral assembly to selectively bind and package two plus strands of genomic RNA. Endogenous Gag proteins may have kept, lost or modified their original function during evolution. This chain is Endogenous retrovirus group K member 8 Gag polyprotein (ERVK-8), found in Homo sapiens (Human).